The chain runs to 427 residues: 3-phosphoshikimate 1-carboxyvinyltransferase (427 aa).

3-phosphoshikimate-binding residues include Lys20, Ser21, and Arg25. Lys20 is a phosphoenolpyruvate binding site. Residues Gly92 and Arg120 each contribute to the phosphoenolpyruvate site. 3-phosphoshikimate-binding residues include Ser166, Gln168, Asp312, and Lys339. Gln168 is a phosphoenolpyruvate binding site. The active-site Proton acceptor is Asp312. 2 residues coordinate phosphoenolpyruvate: Arg343 and Arg385.

This sequence belongs to the EPSP synthase family. As to quaternary structure, monomer.

Its subcellular location is the cytoplasm. It catalyses the reaction 3-phosphoshikimate + phosphoenolpyruvate = 5-O-(1-carboxyvinyl)-3-phosphoshikimate + phosphate. Its pathway is metabolic intermediate biosynthesis; chorismate biosynthesis; chorismate from D-erythrose 4-phosphate and phosphoenolpyruvate: step 6/7. Catalyzes the transfer of the enolpyruvyl moiety of phosphoenolpyruvate (PEP) to the 5-hydroxyl of shikimate-3-phosphate (S3P) to produce enolpyruvyl shikimate-3-phosphate and inorganic phosphate. This Streptococcus pneumoniae serotype 19F (strain G54) protein is 3-phosphoshikimate 1-carboxyvinyltransferase.